The primary structure comprises 320 residues: Cytochrome f (320 aa).

Positions 1–35 (MQTRNTLSWIREEITRSISVSLMIYIITWASISSA) are cleaved as a signal peptide. Positions 36, 56, 59, and 60 each coordinate heme. Residues 286–306 (VQGLLFFLGSVVLAQIFLVLK) form a helical membrane-spanning segment.

Belongs to the cytochrome f family. As to quaternary structure, the 4 large subunits of the cytochrome b6-f complex are cytochrome b6, subunit IV (17 kDa polypeptide, petD), cytochrome f and the Rieske protein, while the 4 small subunits are PetG, PetL, PetM and PetN. The complex functions as a dimer. The cofactor is heme.

It localises to the plastid. Its subcellular location is the chloroplast thylakoid membrane. Its function is as follows. Component of the cytochrome b6-f complex, which mediates electron transfer between photosystem II (PSII) and photosystem I (PSI), cyclic electron flow around PSI, and state transitions. This chain is Cytochrome f, found in Olimarabidopsis pumila (Dwarf rocket).